The chain runs to 387 residues: Erythronate-4-phosphate dehydrogenase (387 aa).

2 residues coordinate substrate: Ser45 and Thr67. Asp147 is a binding site for NAD(+). Residue Arg208 is part of the active site. Asp232 provides a ligand contact to NAD(+). Glu237 is an active-site residue. Catalysis depends on His254, which acts as the Proton donor. NAD(+) is bound at residue Gly257. A substrate-binding site is contributed by Tyr258.

This sequence belongs to the D-isomer specific 2-hydroxyacid dehydrogenase family. PdxB subfamily. Homodimer.

The protein localises to the cytoplasm. The enzyme catalyses 4-phospho-D-erythronate + NAD(+) = (R)-3-hydroxy-2-oxo-4-phosphooxybutanoate + NADH + H(+). The protein operates within cofactor biosynthesis; pyridoxine 5'-phosphate biosynthesis; pyridoxine 5'-phosphate from D-erythrose 4-phosphate: step 2/5. Its function is as follows. Catalyzes the oxidation of erythronate-4-phosphate to 3-hydroxy-2-oxo-4-phosphonooxybutanoate. This Shewanella sediminis (strain HAW-EB3) protein is Erythronate-4-phosphate dehydrogenase.